Consider the following 92-residue polypeptide: Small ribosomal subunit protein uS19 (92 aa).

The protein belongs to the universal ribosomal protein uS19 family.

In terms of biological role, protein S19 forms a complex with S13 that binds strongly to the 16S ribosomal RNA. The chain is Small ribosomal subunit protein uS19 from Neisseria gonorrhoeae (strain ATCC 700825 / FA 1090).